A 277-amino-acid chain; its full sequence is NADPH-dependent 7-cyano-7-deazaguanine reductase (277 aa).

Residue 83–85 (VES) participates in substrate binding. 85–86 (SK) contacts NADPH. The active-site Thioimide intermediate is cysteine 184. The Proton donor role is filled by aspartate 191. 223-224 (HE) contributes to the substrate binding site. Position 252-253 (252-253 (RG)) interacts with NADPH.

This sequence belongs to the GTP cyclohydrolase I family. QueF type 2 subfamily. In terms of assembly, homodimer.

The protein resides in the cytoplasm. The enzyme catalyses 7-aminomethyl-7-carbaguanine + 2 NADP(+) = 7-cyano-7-deazaguanine + 2 NADPH + 3 H(+). Its pathway is tRNA modification; tRNA-queuosine biosynthesis. Functionally, catalyzes the NADPH-dependent reduction of 7-cyano-7-deazaguanine (preQ0) to 7-aminomethyl-7-deazaguanine (preQ1). This is NADPH-dependent 7-cyano-7-deazaguanine reductase from Cupriavidus taiwanensis (strain DSM 17343 / BCRC 17206 / CCUG 44338 / CIP 107171 / LMG 19424 / R1) (Ralstonia taiwanensis (strain LMG 19424)).